Reading from the N-terminus, the 1302-residue chain is Vascular endothelial growth factor receptor kdr-like (1302 aa).

The N-terminal stretch at 1–28 (MTPLKTSVKAFFTLHVLFSCISHGLVEG) is a signal peptide. Residues 29–740 (SRLPDPQLLP…GEDGKPNIEV (712 aa)) are Extracellular-facing. 7 Ig-like C2-type domains span residues 34–115 (PQLL…HEVS), 143–206 (DPYF…VDNA), 222–318 (KNLA…TKVI), 326–412 (NVTH…ISYK), 419–542 (PKIF…FYVD), 545–636 (PQPF…SALT), and 643–728 (PWLM…AVIT). 2 cysteine pairs are disulfide-bonded: Cys-55–Cys-104 and Cys-150–Cys-199. N-linked (GlcNAc...) asparagine glycosylation is found at Asn-69 and Asn-97. 17 N-linked (GlcNAc...) asparagine glycosylation sites follow: Asn-242, Asn-265, Asn-291, Asn-326, Asn-370, Asn-380, Asn-408, Asn-453, Asn-466, Asn-505, Asn-517, Asn-532, Asn-607, Asn-611, Asn-630, Asn-648, and Asn-655. Cys-243 and Cys-302 form a disulfide bridge. A disulfide bridge links Cys-444 with Cys-524. Cys-565 and Cys-618 form a disulfide bridge. Cys-664 and Cys-712 are disulfide-bonded. Residues 741–761 (IILVSTGAAATFLWIMLILFI) traverse the membrane as a helical segment. The Cytoplasmic portion of the chain corresponds to 762–1302 (RKLRKPSSAD…YVVRYSTPPV (541 aa)). The Protein kinase domain occupies 809 to 1139 (LRLGKTLGHG…ELVERLGDLL (331 aa)). ATP-binding positions include 815-823 (LGHGAFGKV) and Lys-843. Asp-1003 serves as the catalytic Proton acceptor. Phosphotyrosine; by autocatalysis is present on residues Tyr-1029, Tyr-1034, and Tyr-1150. 2 disordered regions span residues 1159 to 1179 (TKAD…PVSL) and 1266 to 1292 (PLVP…PDYN). Residues 1162–1176 (DPSNQSPTEETSTRP) are compositionally biased toward polar residues.

Belongs to the protein kinase superfamily. Tyr protein kinase family. CSF-1/PDGF receptor subfamily. As to quaternary structure, interacts with isoform VEGF165 of vegfaa and isoform VEGF171 of vegfab. In terms of processing, phosphorylated and activated by vegfaa and vegfab. First expressed in embryos between 5- and 7-somites. At 7 somites, expressed in discrete bilateral stripes both anteriorly and posteriorly, and in a transverse ectodermal stripe in the hindbrain. From 7-somites, expression seems to extend caudally from the head, and in both directions in the trunk region, until by 20-somites, expression is detected as a continuous band from the anterior head region to the tailbud. Concurrently, cells expressing kdrl in the mid- and posterior trunk regions converge medially. By 24 hours post-fertilization (hpf), expressed in all the endothelial cells lining the vasculature.

The protein localises to the cell membrane. It carries out the reaction L-tyrosyl-[protein] + ATP = O-phospho-L-tyrosyl-[protein] + ADP + H(+). In terms of biological role, receptor for VEGF or VEGFC. Has a tyrosine-protein kinase activity. Combinations of multiple VEGF receptors are required for development of different blood vessel types in the embryo. Involved in angiogenesis, specifically in VEGF-induced sprouting of new blood vessels. Particularly involved in artery formation. Does not appear to be required for hematopoiesis. The chain is Vascular endothelial growth factor receptor kdr-like (kdrl) from Danio rerio (Zebrafish).